Consider the following 87-residue polypeptide: Cytochrome c6 (87 aa).

Heme c contacts are provided by Cys10, Cys13, His14, and Met56.

The protein belongs to the cytochrome c family. PetJ subfamily. In terms of assembly, monomer. Post-translationally, binds 1 heme c group covalently per subunit.

Its subcellular location is the plastid. The protein localises to the chloroplast thylakoid lumen. Its function is as follows. Functions as an electron carrier between membrane-bound cytochrome b6-f and photosystem I in oxygenic photosynthesis. In Euglena gracilis, this protein is Cytochrome c6 (petJ).